The sequence spans 201 residues: Superoxide dismutase [Mn] (201 aa).

Mn(2+) is bound by residues His27, His81, Asp163, and His167.

This sequence belongs to the iron/manganese superoxide dismutase family. In terms of assembly, homodimer. The cofactor is Mn(2+).

The protein resides in the secreted. The enzyme catalyses 2 superoxide + 2 H(+) = H2O2 + O2. In terms of biological role, destroys superoxide anion radicals which are normally produced within the cells and which are toxic to biological systems. This chain is Superoxide dismutase [Mn] (sodA), found in Streptococcus pyogenes serotype M3 (strain ATCC BAA-595 / MGAS315).